Here is a 72-residue protein sequence, read N- to C-terminus: Metallothionein-like protein 1B (72 aa).

It belongs to the metallothionein superfamily. Type 15 family. As to expression, expressed in leaves of mature plants.

Its function is as follows. Metallothioneins have a high content of cysteine residues that bind various heavy metals. Functions as a metal chelator of nickel (Ni), cadmium (Cd), zinc (Zn) and copper (Cu). Possesses higher affinity for Ni and Cd ions compared to Zn and Cu ions. This Oryza sativa subsp. japonica (Rice) protein is Metallothionein-like protein 1B (MT1B).